We begin with the raw amino-acid sequence, 204 residues long: Large ribosomal subunit protein uL18 (204 aa).

Belongs to the universal ribosomal protein uL18 family. Part of the 50S ribosomal subunit. Contacts the 5S and 23S rRNAs.

Functionally, this is one of the proteins that bind and probably mediate the attachment of the 5S RNA into the large ribosomal subunit, where it forms part of the central protuberance. The sequence is that of Large ribosomal subunit protein uL18 from Ignicoccus hospitalis (strain KIN4/I / DSM 18386 / JCM 14125).